The primary structure comprises 71 residues: Equinin B (71 aa).

Positions 1 to 11 are cleaved as a signal peptide; that stretch reads MAVIMVDQAEG. The propeptide occupies 46–71; it reads GDEPQQMALDDESDPLVILPNNYNDY.

Post-translationally, contains 4 disulfide bonds.

The protein localises to the secreted. It localises to the target cell membrane. Its function is as follows. Antimicrobial peptide with inhibitory activity against both Gram-positive and Gram-negative bacteria (E.coli (MIC=0.25 ug/ml), M.lysodeikticus (MIC=0.25 ug/ml), and V.alginolyticus (MIC=0.25 ug/ml)). Does not show hemolytic activity. In Actinia equina (Beadlet anemone), this protein is Equinin B.